The sequence spans 435 residues: MDTASHSLVLLQQLNMQREFGFLCDCTVAIGDVYFKAHRAVLAAFSNYFKMIFIHQTSECIKIQPTDIQPDIFSYLLHIMYTGKGPKQIVDHSRLEEGIRFLHADYLSHIATEMNQVFSPETVQSSNLYGIQISTTQKTVVKQGLEVKEAPSSNSGNRAAVQGDHPQLQLSLAIGLDDGTADQQRACPATQALEEHQKPPVSIKQERCDPESVISQSHPSPSSEVTGPTFTENSVKIHLCHYCGERFDSRSNLRQHLHTHVSGSLPFGVPASILESNDLGEVHPLNENSEALECRRLSSFIVKENEQQPDHTNRGTTEPLQISQVSLISKDTEPVELNCNFSFSRKRKMSCTICGHKFPRKSQLLEHMYTHKGKSYRYNRCQRFGNALAQRFQPYCDSWSDVSLKSSRLSQEHLDLPCALESELTQENVDTILVE.

The BTB domain occupies 1–107; the sequence is MDTASHSLVL…GIRFLHADYL (107 aa). Residues Lys142, Lys148, Lys198, and Lys204 each participate in a glycyl lysine isopeptide (Lys-Gly) (interchain with G-Cter in SUMO2) cross-link. The C2H2-type 1 zinc-finger motif lies at 238 to 260; it reads HLCHYCGERFDSRSNLRQHLHTH. Residues Lys303 and Lys330 each participate in a glycyl lysine isopeptide (Lys-Gly) (interchain with G-Cter in SUMO2) cross-link. The segment at 349-371 adopts a C2H2-type 2 zinc-finger fold; that stretch reads MSCTICGHKFPRKSQLLEHMYTH. Lys405 participates in a covalent cross-link: Glycyl lysine isopeptide (Lys-Gly) (interchain with G-Cter in SUMO2).

As to expression, expressed mainly in hematopoietic cells and testis.

Its subcellular location is the nucleus. Its function is as follows. May be involved in transcriptional regulation. The sequence is that of Zinc finger and BTB domain-containing protein 25 (ZBTB25) from Homo sapiens (Human).